The following is a 256-amino-acid chain: Floral homeotic protein APETALA 1-2 (256 aa).

The 61-residue stretch at 1–61 (MGRGRVQLKR…GKLFEYSTDS (61 aa)) folds into the MADS-box domain. In terms of domain architecture, K-box spans 88–178 (NTNWSMEYNR…SKQIKERENV (91 aa)). The tract at residues 187–206 (DEQNHGHNMPPPPPPQQHQI) is disordered.

In terms of assembly, homodimer capable of binding to CArG-box sequences.

The protein resides in the nucleus. Transcription factor that promotes early floral meristem identity in synergy with LEAFY. Displays a redundant function with CAULIFLOWER in the up-regulation of LEAFY. Required subsequently for the transition of an inflorescence meristem into a floral meristem, and for the normal development of sepals and petals in flowers. Regulates positively B class homeotic proteins. The protein is Floral homeotic protein APETALA 1-2 (2AP1) of Brassica oleracea var. italica (Broccoli).